A 360-amino-acid chain; its full sequence is Photosystem II protein D1 (360 aa).

3 consecutive transmembrane segments (helical) span residues 29–46 (YIGW…TATS), 118–133 (HFLL…EWEL), and 142–156 (WISV…AAAA). His118 serves as a coordination point for chlorophyll a. Tyr126 provides a ligand contact to pheophytin a. The [CaMn4O5] cluster site is built by Asp170 and Glu189. The helical transmembrane segment at 197–218 (FHQLGVAGVFGGSLFSAMHGSL) threads the bilayer. His198 is a chlorophyll a binding site. A quinone contacts are provided by residues His215 and 264–265 (SF). A Fe cation-binding site is contributed by His215. Residue His272 coordinates Fe cation. A helical membrane pass occupies residues 274–288 (FLGAWPVVGIWLTSM). The [CaMn4O5] cluster site is built by His332, Glu333, Asp342, and Ala344. A propeptide spanning residues 345–360 (SGDSCPVALVAPSING) is cleaved from the precursor.

It belongs to the reaction center PufL/M/PsbA/D family. PSII is composed of 1 copy each of membrane proteins PsbA, PsbB, PsbC, PsbD, PsbE, PsbF, PsbH, PsbI, PsbJ, PsbK, PsbL, PsbM, PsbT, PsbX, PsbY, PsbZ, Psb30/Ycf12, at least 3 peripheral proteins of the oxygen-evolving complex and a large number of cofactors. It forms dimeric complexes. The D1/D2 heterodimer binds P680, chlorophylls that are the primary electron donor of PSII, and subsequent electron acceptors. It shares a non-heme iron and each subunit binds pheophytin, quinone, additional chlorophylls, carotenoids and lipids. D1 provides most of the ligands for the Mn4-Ca-O5 cluster of the oxygen-evolving complex (OEC). There is also a Cl(-1) ion associated with D1 and D2, which is required for oxygen evolution. The PSII complex binds additional chlorophylls, carotenoids and specific lipids. is required as a cofactor. In terms of processing, tyr-161 forms a radical intermediate that is referred to as redox-active TyrZ, YZ or Y-Z. C-terminally processed by CTPA; processing is essential to allow assembly of the oxygen-evolving complex and thus photosynthetic growth.

The protein resides in the plastid. It localises to the chloroplast thylakoid membrane. The catalysed reaction is 2 a plastoquinone + 4 hnu + 2 H2O = 2 a plastoquinol + O2. In terms of biological role, photosystem II (PSII) is a light-driven water:plastoquinone oxidoreductase that uses light energy to abstract electrons from H(2)O, generating O(2) and a proton gradient subsequently used for ATP formation. It consists of a core antenna complex that captures photons, and an electron transfer chain that converts photonic excitation into a charge separation. The D1/D2 (PsbA/PsbD) reaction center heterodimer binds P680, the primary electron donor of PSII as well as several subsequent electron acceptors. This Palmaria palmata (Dulse) protein is Photosystem II protein D1.